Here is a 478-residue protein sequence, read N- to C-terminus: Ribosomal RNA small subunit methyltransferase F (478 aa).

S-adenosyl-L-methionine contacts are provided by residues 123–129, E147, D174, and D192; that span reads AAAPGSK. The active-site Nucleophile is C245.

Belongs to the class I-like SAM-binding methyltransferase superfamily. RsmB/NOP family.

It localises to the cytoplasm. The enzyme catalyses cytidine(1407) in 16S rRNA + S-adenosyl-L-methionine = 5-methylcytidine(1407) in 16S rRNA + S-adenosyl-L-homocysteine + H(+). Its function is as follows. Specifically methylates the cytosine at position 1407 (m5C1407) of 16S rRNA. This is Ribosomal RNA small subunit methyltransferase F from Vibrio parahaemolyticus serotype O3:K6 (strain RIMD 2210633).